The sequence spans 475 residues: Sulfate adenylyltransferase subunit 1 (475 aa).

In terms of domain architecture, tr-type G spans 25 to 239; the sequence is KSLLRFLTCG…EVLETVEIQR (215 aa). The tract at residues 34–41 is G1; the sequence is GSVDDGKS. Residue 34-41 participates in GTP binding; sequence GSVDDGKS. Residues 92–96 form a G2 region; sequence GITID. A G3 region spans residues 113–116; sequence DTPG. Residues 113-117 and 168-171 each bind GTP; these read DTPGH and NKMD. Residues 168–171 are G4; the sequence is NKMD. Residues 206–208 form a G5 region; sequence SAL.

The protein belongs to the TRAFAC class translation factor GTPase superfamily. Classic translation factor GTPase family. CysN/NodQ subfamily. Heterodimer composed of CysD, the smaller subunit, and CysN.

The catalysed reaction is sulfate + ATP + H(+) = adenosine 5'-phosphosulfate + diphosphate. It functions in the pathway sulfur metabolism; hydrogen sulfide biosynthesis; sulfite from sulfate: step 1/3. In terms of biological role, with CysD forms the ATP sulfurylase (ATPS) that catalyzes the adenylation of sulfate producing adenosine 5'-phosphosulfate (APS) and diphosphate, the first enzymatic step in sulfur assimilation pathway. APS synthesis involves the formation of a high-energy phosphoric-sulfuric acid anhydride bond driven by GTP hydrolysis by CysN coupled to ATP hydrolysis by CysD. This chain is Sulfate adenylyltransferase subunit 1, found in Escherichia coli (strain 55989 / EAEC).